The primary structure comprises 152 residues: Nucleoside diphosphate kinase (152 aa).

Lys11, Phe59, Arg87, Thr93, Arg104, and Asn114 together coordinate ATP. Catalysis depends on His117, which acts as the Pros-phosphohistidine intermediate.

It belongs to the NDK family. Homotetramer. The cofactor is Mg(2+).

It localises to the cytoplasm. It carries out the reaction a 2'-deoxyribonucleoside 5'-diphosphate + ATP = a 2'-deoxyribonucleoside 5'-triphosphate + ADP. It catalyses the reaction a ribonucleoside 5'-diphosphate + ATP = a ribonucleoside 5'-triphosphate + ADP. Major role in the synthesis of nucleoside triphosphates other than ATP. The ATP gamma phosphate is transferred to the NDP beta phosphate via a ping-pong mechanism, using a phosphorylated active-site intermediate. This Prochlorococcus marinus (strain MIT 9215) protein is Nucleoside diphosphate kinase.